The sequence spans 254 residues: Imidazole glycerol phosphate synthase subunit HisF (254 aa).

Active-site residues include Asp-11 and Asp-130.

The protein belongs to the HisA/HisF family. In terms of assembly, heterodimer of HisH and HisF.

It is found in the cytoplasm. The enzyme catalyses 5-[(5-phospho-1-deoxy-D-ribulos-1-ylimino)methylamino]-1-(5-phospho-beta-D-ribosyl)imidazole-4-carboxamide + L-glutamine = D-erythro-1-(imidazol-4-yl)glycerol 3-phosphate + 5-amino-1-(5-phospho-beta-D-ribosyl)imidazole-4-carboxamide + L-glutamate + H(+). It functions in the pathway amino-acid biosynthesis; L-histidine biosynthesis; L-histidine from 5-phospho-alpha-D-ribose 1-diphosphate: step 5/9. Functionally, IGPS catalyzes the conversion of PRFAR and glutamine to IGP, AICAR and glutamate. The HisF subunit catalyzes the cyclization activity that produces IGP and AICAR from PRFAR using the ammonia provided by the HisH subunit. The polypeptide is Imidazole glycerol phosphate synthase subunit HisF (Staphylococcus carnosus (strain TM300)).